An 843-amino-acid chain; its full sequence is Eisosome protein 1 (843 aa).

A disordered region spans residues 1 to 53 (MSLISAVEDRDIHNIGKTSGGGSRTSSITSSKKSLKHGSKSLRKPKVYQTTGE). Position 2 is an N-acetylserine (serine 2). Serine 2 bears the Phosphoserine mark. Positions 33–46 (KSLKHGSKSLRKPK) are enriched in basic residues. Residues serine 88 and serine 130 each carry the phosphoserine modification. The interval 120–174 (KMGPKVVRNNSITSATSKTSKESQTKRKSKESPGAAASKAYSMTMETTSLSSQTN) is disordered. 2 stretches are compositionally biased toward polar residues: residues 127–137 (RNNSITSATSK) and 163–174 (TMETTSLSSQTN). Phosphoserine is present on residues serine 182, serine 401, serine 584, and serine 710. Residues 717 to 843 (DLPTQLEKIE…QDAISNQEKK (127 aa)) form a disordered region. The residue at position 720 (threonine 720) is a Phosphothreonine. Over residues 752–764 (STAAKEATETSSA) the composition is skewed to low complexity. Phosphoserine is present on residues serine 763 and serine 775. Residues 781 to 797 (SGKEDANDCKSAEHSKE) show a composition bias toward basic and acidic residues. Positions 798-810 (ISVSQKAGNNKSL) are enriched in polar residues. Phosphoserine occurs at positions 816, 828, 829, and 838.

The protein belongs to the EIS1 family.

Its subcellular location is the cytoplasmic granule. It localises to the cell membrane. Its function is as follows. Required for normal formation of eisosomes, large cytoplasmic protein assemblies that localize to specialized domains on plasma membrane and mark the site of endocytosis. This Saccharomyces cerevisiae (strain ATCC 204508 / S288c) (Baker's yeast) protein is Eisosome protein 1 (EIS1).